The primary structure comprises 293 residues: Glycine betaine-binding protein OpuAC (293 aa).

Residues 1–20 (MLKKIIGIGVSAMLALSLAA) form the signal peptide. A lipid anchor (N-palmitoyl cysteine) is attached at C21. C21 carries the S-diacylglycerol cysteine lipid modification.

In terms of assembly, the complex is composed of two ATP-binding proteins (OpuAA), two transmembrane proteins (OpuAB) and a solute-binding protein (OpuAC). Interacts with FloT.

The protein localises to the cell membrane. It localises to the membrane raft. Its function is as follows. Involved in a multicomponent binding-protein-dependent transport system for glycine betaine. This Bacillus subtilis (strain 168) protein is Glycine betaine-binding protein OpuAC (opuAC).